The sequence spans 610 residues: T-cell immunomodulatory protein (610 aa).

An N-terminal signal peptide occupies residues 1-32 (MAAGRLPSARAVLAPLFLGLALLSVGPAPARA). Asparagine 35, asparagine 123, asparagine 138, asparagine 145, asparagine 150, asparagine 175, and asparagine 241 each carry an N-linked (GlcNAc...) asparagine glycan. An FG-GAP 1; atypical repeat occupies 98 to 135 (LVTSVVPGDYDGDSQMDVLLTYFPQNHTNSELGAVIFW). The stretch at 153 to 183 (FHDQPLIMDFNGDLIPDVFGITNESSQPQIL) is one FG-GAP 2; atypical repeat. One copy of the FG-GAP 3; atypical repeat lies at 256–291 (VVGQSAFADFDGDGHMDHLLPGCEDKDCQKSAIYLM). N-linked (GlcNAc...) asparagine glycosylation is found at asparagine 351, asparagine 369, and asparagine 480. The chain crosses the membrane as a helical span at residues 565–585 (VLLTAVALIGVCIFILAIIAI).

The protein belongs to the TIP family. In terms of assembly, interacts with RUVBL1, RUVBL2 and alpha-tubulin.

Its subcellular location is the secreted. It localises to the membrane. In terms of biological role, modulator of T-cell function. Has a protective effect in graft versus host disease model. This is T-cell immunomodulatory protein from Mus musculus (Mouse).